Consider the following 145-residue polypeptide: Transcription antitermination protein NusB (145 aa).

It belongs to the NusB family.

Functionally, involved in transcription antitermination. Required for transcription of ribosomal RNA (rRNA) genes. Binds specifically to the boxA antiterminator sequence of the ribosomal RNA (rrn) operons. The chain is Transcription antitermination protein NusB from Psychromonas ingrahamii (strain DSM 17664 / CCUG 51855 / 37).